We begin with the raw amino-acid sequence, 365 residues long: Cytosolic 5'-nucleotidase 1A (365 aa).

The segment covering 1–11 (MEPGQPREARE) has biased composition (basic and acidic residues). The segment at 1-23 (MEPGQPREAREPGPGAETAAVPR) is disordered. Asp-208 functions as the Nucleophile in the catalytic mechanism.

The protein belongs to the 5'-nucleotidase type 3 family. Requires Mg(2+) as cofactor.

The protein localises to the cytoplasm. It carries out the reaction a ribonucleoside 5'-phosphate + H2O = a ribonucleoside + phosphate. It catalyses the reaction a 2'-deoxyribonucleoside 5'-phosphate + H2O = a 2'-deoxyribonucleoside + phosphate. The enzyme catalyses IMP + H2O = inosine + phosphate. The catalysed reaction is AMP + H2O = adenosine + phosphate. It carries out the reaction dCMP + H2O = 2'-deoxycytidine + phosphate. Activated by ADP. Its function is as follows. Catalyzes the hydrolysis of ribonucleotide and deoxyribonucleotide monophosphates, releasing inorganic phosphate and the corresponding nucleoside. AMP is the major substrate but can also hydrolyze dCMP and IMP. This chain is Cytosolic 5'-nucleotidase 1A (Nt5c1a), found in Mus musculus (Mouse).